An 858-amino-acid polypeptide reads, in one-letter code: Volume-regulated anion channel subunit LRRC8D (858 aa).

At 1 to 22 (MFTLAEVASLNDIQPTYRILKP) the chain is on the cytoplasmic side. Residues 23-48 (WWDVFMDYLAVVMLMVAIFAGTMQLT) traverse the membrane as a helical segment. The Extracellular segment spans residues 49–163 (KDQVVCLPVL…YHLALPWYSK (115 aa)). A disulfide bridge links C54 with C354. Residues 164 to 182 (YFPYLALIHTIILMVSSNF) traverse the membrane as a helical segment. Residues 183 to 308 (WFKYPKTCSK…EDSDLIYKLY (126 aa)) lie on the Cytoplasmic side of the membrane. Residues 221-251 (SEENKQRITGAQTLPKHVSTSSDEGSPSAST) are disordered. The segment covering 227–251 (RITGAQTLPKHVSTSSDEGSPSAST) has biased composition (polar residues). 3 positions are modified to phosphoserine: S241, S242, and S246. Residues 309-328 (VVQTVIKTAKFIFILCYTAN) form a helical membrane-spanning segment. Residues 329-360 (FVNAISFEHVCKPKVEHLIGYEVFECTHNMAY) are Extracellular-facing. The helical transmembrane segment at 361–386 (MLKKLLISYISIICVYGFICLYTLFW) threads the bilayer. The Cytoplasmic segment spans residues 387-858 (LFRIPLKEYS…DINIPFANGI (472 aa)). LRR repeat units follow at residues 514-534 (NLQELHLCHCPAKVEQTAFSF), 538-559 (HLRCLHVKFTDVAEIPAWVYLL), 561-582 (NLRELYLIGNLNSENNKMIGLE), 589-609 (HLKILHVKSNLTKVPSNITDV), 612-632 (HLTKLVIHNDGTKLLVLNSLK), 636-657 (NVAELELQNCELERIPHAIFSL), 659-680 (NLQELDLKSNNIRTIEEIISFQ), 684-705 (RLTCLKLWHNKIVTIPPSITHV), 707-728 (NLESLYFSNNKLESLPVAVFSL), 730-751 (KLRCLDVSYNNISMIPIEIGLL), 753-774 (NLQHLHITGNKVDILPKQLFKC), 776-797 (KLRTLNLGQNCITSLPEKVGQL), and 799-820 (QLTQLELKGNCLDRLPAQLGQC).

The protein belongs to the LRRC8 family. As to quaternary structure, heterohexamer; oligomerizes with other LRRC8 proteins (LRRC8A, LRRC8B, LRRC8C and/or LRRC8E) to form a heterohexamer. In vivo, the subunit composition may depend primarily on expression levels, and heterooligomeric channels containing various proportions of the different LRRC8 proteins may coexist.

It is found in the cell membrane. The protein resides in the endoplasmic reticulum membrane. It carries out the reaction chloride(in) = chloride(out). The catalysed reaction is iodide(out) = iodide(in). The enzyme catalyses taurine(out) = taurine(in). Non-essential component of the volume-regulated anion channel (VRAC, also named VSOAC channel), an anion channel required to maintain a constant cell volume in response to extracellular or intracellular osmotic changes. The VRAC channel conducts iodide better than chloride and can also conduct organic osmolytes like taurine. Plays a redundant role in the efflux of amino acids, such as aspartate, in response to osmotic stress. LRRC8A and LRRC8D are required for the uptake of the drug cisplatin. Channel activity requires LRRC8A plus at least one other family member (LRRC8B, LRRC8C, LRRC8D or LRRC8E); channel characteristics depend on the precise subunit composition. Also acts as a regulator of glucose-sensing in pancreatic beta cells: VRAC currents, generated in response to hypotonicity- or glucose-induced beta cell swelling, depolarize cells, thereby causing electrical excitation, leading to increase glucose sensitivity and insulin secretion. VRAC channels containing LRRC8D inhibit transport of immunoreactive cyclic dinucleotide GMP-AMP (2'-3'-cGAMP), an immune messenger produced in response to DNA virus in the cytosol. Mediates the import of the antibiotic blasticidin-S into the cell. In Homo sapiens (Human), this protein is Volume-regulated anion channel subunit LRRC8D.